A 202-amino-acid chain; its full sequence is uncharacterized protein (202 aa).

A disordered region spans residues 118–202 (SSVSPVSSKK…KVSGTKKVKA (85 aa)). Phosphoserine is present on S121. 2 stretches are compositionally biased toward basic residues: residues 142–163 (EKSK…KSKR) and 186–202 (SSKS…KVKA).

The protein resides in the nucleus. It is found in the nucleolus. This is an uncharacterized protein from Schizosaccharomyces pombe (strain 972 / ATCC 24843) (Fission yeast).